Here is a 113-residue protein sequence, read N- to C-terminus: UPF0482 protein KPN78578_15540 (113 aa).

An N-terminal signal peptide occupies residues 1–28 (MNMTLNKRWCLTAILALSAVVYTSSSYA). The tract at residues 38 to 60 (GDSAQSRQQASMEKEQWNDTRSL) is disordered. A compositionally biased stretch (polar residues) spans 39-48 (DSAQSRQQAS). Basic and acidic residues predominate over residues 49–59 (MEKEQWNDTRS).

This sequence belongs to the UPF0482 family.

This Klebsiella pneumoniae subsp. pneumoniae (strain ATCC 700721 / MGH 78578) protein is UPF0482 protein KPN78578_15540.